Here is a 1550-residue protein sequence, read N- to C-terminus: Pentafunctional AROM polypeptide (1550 aa).

The tract at residues 1–379 is 3-dehydroquinate synthase; that stretch reads MSIERVPILG…YQLKAHQVSK (379 aa). Residues 42–44, 80–83, 111–113, and Asp-116 contribute to the NAD(+) site; these read DTN, ENNK, and GGV. A 7-phospho-2-dehydro-3-deoxy-D-arabino-heptonate-binding site is contributed by Arg-127. Residue 136 to 137 participates in NAD(+) binding; that stretch reads TT. Residues Asp-143 and Lys-149 each coordinate 7-phospho-2-dehydro-3-deoxy-D-arabino-heptonate. Lys-158 is an NAD(+) binding site. Asn-159 is a 7-phospho-2-dehydro-3-deoxy-D-arabino-heptonate binding site. Residues 176-179 and Asn-187 contribute to the NAD(+) site; that span reads FLET. Residue Glu-191 participates in Zn(2+) binding. 7-phospho-2-dehydro-3-deoxy-D-arabino-heptonate is bound by residues 191–194 and Lys-243; that span reads EVVK. The active-site Proton acceptor; for 3-dehydroquinate synthase activity is the Glu-253. 7-phospho-2-dehydro-3-deoxy-D-arabino-heptonate-binding positions include 257-261 and His-264; that span reads RNLLN. His-264 is a Zn(2+) binding site. The active-site Proton acceptor; for 3-dehydroquinate synthase activity is His-268. Positions 280 and 351 each coordinate 7-phospho-2-dehydro-3-deoxy-D-arabino-heptonate. Position 280 (His-280) interacts with Zn(2+). An EPSP synthase region spans residues 392–837; sequence VHPFTNPPKE…WDILHSKFKI (446 aa). The interval 857–1047 is shikimate kinase; that stretch reads DKGVIVIGMR…VPTGRSTAVV (191 aa). Residue 864 to 871 participates in ATP binding; it reads GMRGTGKS. Residues 1048-1257 are 3-dehydroquinase; sequence LTLPDLNNVA…NDDGLLTIGE (210 aa). The active-site Schiff-base intermediate with substrate; for 3-dehydroquinate dehydratase activity is the Arg-1193. Residues 1270–1550 form a shikimate dehydrogenase region; that stretch reads AKKFWVIGSP…EIIHRAVVEE (281 aa).

This sequence in the N-terminal section; belongs to the sugar phosphate cyclases superfamily. Dehydroquinate synthase family. It in the 2nd section; belongs to the EPSP synthase family. The protein in the 3rd section; belongs to the shikimate kinase family. In the 4th section; belongs to the type-I 3-dehydroquinase family. This sequence in the C-terminal section; belongs to the shikimate dehydrogenase family. As to quaternary structure, homodimer. Zn(2+) is required as a cofactor.

The protein resides in the cytoplasm. The catalysed reaction is 7-phospho-2-dehydro-3-deoxy-D-arabino-heptonate = 3-dehydroquinate + phosphate. It carries out the reaction 3-dehydroquinate = 3-dehydroshikimate + H2O. It catalyses the reaction shikimate + NADP(+) = 3-dehydroshikimate + NADPH + H(+). The enzyme catalyses shikimate + ATP = 3-phosphoshikimate + ADP + H(+). The catalysed reaction is 3-phosphoshikimate + phosphoenolpyruvate = 5-O-(1-carboxyvinyl)-3-phosphoshikimate + phosphate. It functions in the pathway metabolic intermediate biosynthesis; chorismate biosynthesis; chorismate from D-erythrose 4-phosphate and phosphoenolpyruvate: step 2/7. It participates in metabolic intermediate biosynthesis; chorismate biosynthesis; chorismate from D-erythrose 4-phosphate and phosphoenolpyruvate: step 3/7. Its pathway is metabolic intermediate biosynthesis; chorismate biosynthesis; chorismate from D-erythrose 4-phosphate and phosphoenolpyruvate: step 4/7. The protein operates within metabolic intermediate biosynthesis; chorismate biosynthesis; chorismate from D-erythrose 4-phosphate and phosphoenolpyruvate: step 5/7. It functions in the pathway metabolic intermediate biosynthesis; chorismate biosynthesis; chorismate from D-erythrose 4-phosphate and phosphoenolpyruvate: step 6/7. Functionally, the AROM polypeptide catalyzes 5 consecutive enzymatic reactions in prechorismate polyaromatic amino acid biosynthesis. This is Pentafunctional AROM polypeptide from Candida dubliniensis (strain CD36 / ATCC MYA-646 / CBS 7987 / NCPF 3949 / NRRL Y-17841) (Yeast).